The chain runs to 63 residues: Large ribosomal subunit protein bL28 (63 aa).

The protein belongs to the bacterial ribosomal protein bL28 family.

The protein is Large ribosomal subunit protein bL28 of Brachyspira hyodysenteriae (strain ATCC 49526 / WA1).